The chain runs to 96 residues: Neutrophil defensin 3 (96 aa).

A signal peptide spans 1 to 19 (MRTLVILAAILLVALQAQA). Residues 20 to 66 (EPLQARTDEATAAQEQIPTDNPEVVVSLAWDESLAPKDSVPGLRKNM) constitute a propeptide that is removed on maturation. 3 disulfide bridges follow: Cys68–Cys96, Cys70–Cys85, and Cys75–Cys95.

It is found in the secreted. In terms of biological role, has bacteriostatic activity against Gram-positive bacteria S.aureus and L.monocytogenes and Gram-negative bacterium E.coli and antifungal activity against C.neoformans. The polypeptide is Neutrophil defensin 3 (Macaca mulatta (Rhesus macaque)).